The following is a 170-amino-acid chain: CFA/I fimbrial subunit B (170 aa).

Residues 1–23 form the signal peptide; the sequence is MKFKKTIGAMALTTMFVAVSASA.

The protein belongs to the fimbrial CS1 protein family. As to quaternary structure, CFA/I fimbriae are rather rigid, thread-like filaments of 0.5-1 micrometer, with an apparent axial hole, and a diameter of 7 nanometers. A single CFA/I fimbria consists of about 100 identical protein subunits.

It localises to the fimbrium. Fimbriae (also called pili), polar filaments radiating from the surface of the bacterium to a length of 0.5-1.5 micrometers and numbering 100-300 per cell, enable bacteria to colonize the epithelium of specific host organs. This Escherichia coli protein is CFA/I fimbrial subunit B (cfaB).